We begin with the raw amino-acid sequence, 207 residues long: uncharacterized protein (207 aa).

It belongs to the methyltransferase superfamily.

This is an uncharacterized protein from Escherichia coli (strain K12).